Consider the following 147-residue polypeptide: MRLSDIKPTPGSMKKRTRVGRGIGSGKGKTSGKGHKGQKARGRGKVHPWFEGGQTPLHRRLPKFGFKNFTKKVYSVVNVEQLEKIFESGEEVTPEKLLEKGVIKKINDGVKILGNGEITKPLTVIAHAFSSSARRKIEAVGGKVEVI.

A disordered region spans residues 1–54 (MRLSDIKPTPGSMKKRTRVGRGIGSGKGKTSGKGHKGQKARGRGKVHPWFEGGQ). Positions 30–46 (TSGKGHKGQKARGRGKV) are enriched in basic residues.

This sequence belongs to the universal ribosomal protein uL15 family. In terms of assembly, part of the 50S ribosomal subunit.

Binds to the 23S rRNA. The chain is Large ribosomal subunit protein uL15 from Thermosipho melanesiensis (strain DSM 12029 / CIP 104789 / BI429).